The primary structure comprises 370 residues: Ubiquitin-binding protein Rv1468c (370 aa).

A UBA region spans residues M1–F72. Residues M1–T93 enclose the PE domain.

Belongs to the mycobacterial PE family. PGRS subfamily. Interacts directly with host polyubiquitin in a UBA-dependent manner.

The protein localises to the secreted. It localises to the cell wall. The protein resides in the cell surface. In terms of biological role, mediates direct binding of host ubiquitin (Ub) to the mycobacterial surface, which triggers host xenophagy. Interaction between Rv1468c and ubiquitin recruits autophagy receptor p62 to deliver mycobacteria into LC3-associated autophagosomes. It could be a viable evolutionary strategy adopted by M.tuberculosis to maintain long-term intracellular survival through self-controlling its intracellular bacterial loads to avoid excessive host inflammatory immune responses. This chain is Ubiquitin-binding protein Rv1468c, found in Mycobacterium tuberculosis (strain ATCC 25618 / H37Rv).